Here is a 655-residue protein sequence, read N- to C-terminus: Mannosyl-oligosaccharide 1,2-alpha-mannosidase IA (655 aa).

The Cytoplasmic segment spans residues 1-43 (MPVGGLLPLFSSPGGGGLGSGLGGGLGGGRKGSGPAAFRLTEK). The chain crosses the membrane as a helical; Signal-anchor for type II membrane protein span at residues 44 to 64 (FVLLLVFSAFITLCFGAIFFL). Topologically, residues 65-655 (PDSSKLLSGV…QKKEIDGKEK (591 aa)) are lumenal. A disulfide bridge links Cys478 with Cys510. N-linked (GlcNAc...) asparagine glycosylation occurs at Asn515. Glu524 functions as the Proton donor in the catalytic mechanism. Thr635 is a Ca(2+) binding site.

This sequence belongs to the glycosyl hydrolase 47 family. Ca(2+) serves as cofactor. N-linked glycan at Asn-515 consists of Man(6)-GlcNAc(2).

Its subcellular location is the golgi apparatus membrane. It carries out the reaction N(4)-(alpha-D-Man-(1-&gt;2)-alpha-D-Man-(1-&gt;2)-alpha-D-Man-(1-&gt;3)-[alpha-D-Man-(1-&gt;2)-alpha-D-Man-(1-&gt;3)-[alpha-D-Man-(1-&gt;2)-alpha-D-Man-(1-&gt;6)]-alpha-D-Man-(1-&gt;6)]-beta-D-Man-(1-&gt;4)-beta-D-GlcNAc-(1-&gt;4)-beta-D-GlcNAc)-L-asparaginyl-[protein] (N-glucan mannose isomer 9A1,2,3B1,2,3) + 4 H2O = N(4)-(alpha-D-Man-(1-&gt;3)-[alpha-D-Man-(1-&gt;3)-[alpha-D-Man-(1-&gt;6)]-alpha-D-Man-(1-&gt;6)]-beta-D-Man-(1-&gt;4)-beta-D-GlcNAc-(1-&gt;4)-beta-D-GlcNAc)-L-asparaginyl-[protein] (N-glucan mannose isomer 5A1,2) + 4 beta-D-mannose. The catalysed reaction is N(4)-(alpha-D-Man-(1-&gt;2)-alpha-D-Man-(1-&gt;2)-alpha-D-Man-(1-&gt;3)-[alpha-D-Man-(1-&gt;3)-[alpha-D-Man-(1-&gt;2)-alpha-D-Man-(1-&gt;6)]-alpha-D-Man-(1-&gt;6)]-beta-D-Man-(1-&gt;4)-beta-D-GlcNAc-(1-&gt;4)-beta-D-GlcNAc)-L-asparaginyl-[protein] (N-glucan mannose isomer 8A1,2,3B1,3) + 3 H2O = N(4)-(alpha-D-Man-(1-&gt;3)-[alpha-D-Man-(1-&gt;3)-[alpha-D-Man-(1-&gt;6)]-alpha-D-Man-(1-&gt;6)]-beta-D-Man-(1-&gt;4)-beta-D-GlcNAc-(1-&gt;4)-beta-D-GlcNAc)-L-asparaginyl-[protein] (N-glucan mannose isomer 5A1,2) + 3 beta-D-mannose. It functions in the pathway protein modification; protein glycosylation. Its activity is regulated as follows. Inhibited by both 1-deoxymannojirimycin and kifunensine. Functionally, involved in the maturation of Asn-linked oligosaccharides. Progressively trim alpha-1,2-linked mannose residues from Man(9)GlcNAc(2) to produce Man(5)GlcNAc(2). This chain is Mannosyl-oligosaccharide 1,2-alpha-mannosidase IA (Man1a1), found in Mus musculus (Mouse).